We begin with the raw amino-acid sequence, 270 residues long: Bis(5'-nucleosyl)-tetraphosphatase, symmetrical (270 aa).

The protein belongs to the Ap4A hydrolase family.

It catalyses the reaction P(1),P(4)-bis(5'-adenosyl) tetraphosphate + H2O = 2 ADP + 2 H(+). Its function is as follows. Hydrolyzes diadenosine 5',5'''-P1,P4-tetraphosphate to yield ADP. The sequence is that of Bis(5'-nucleosyl)-tetraphosphatase, symmetrical from Actinobacillus pleuropneumoniae serotype 3 (strain JL03).